The chain runs to 475 residues: Ankyrin repeat, SAM and basic leucine zipper domain-containing protein 1 (475 aa).

The disordered stretch occupies residues 1 to 25; sequence MAASALRGLPVAGGGESSESEDDGW. Phosphoserine is present on residues Ser17, Ser18, and Ser20. ANK repeat units follow at residues 45–74, 78–107, 110–144, 148–177, 181–210, and 214–243; these read EKKEKFKKAMTIGDVSLVQELLDSGISVDS, YGWTPLMYAASVANAELVRVLLDRGANASF, DKQSILITACSAHGSEEQILKCVELLLSRNADPNV, RLMTPIMYAARDGHTQVVALLVAHGAEVNT, NGYTALTWAARQGHKNIVLKLLELGANKML, and DGKMPSEIAKRNKHHEIFNLLSFTLNPLEG. Residues 272-334 form the SAM domain; it reads SYTAFGDLEV…KILAALKELQ (63 aa).

Interacts with DDX4, PIWIL1, RANBP9 and TDRD1. In terms of tissue distribution, expressed exclusively in the testis and ovary and at higher levels in the adult testis compared with the adult ovary.

The protein resides in the cytoplasm. Its function is as follows. Plays a central role during spermatogenesis by repressing transposable elements and preventing their mobilization, which is essential for the germline integrity. Acts via the piRNA metabolic process, which mediates the repression of transposable elements during meiosis by forming complexes composed of piRNAs and Piwi proteins and governs the methylation and subsequent repression of transposons. Its association with pi-bodies suggests a participation in the primary piRNAs metabolic process. Required prior to the pachytene stage to facilitate the production of multiple types of piRNAs, including those associated with repeats involved in the regulation of retrotransposons. May act by mediating protein-protein interactions during germ cell maturation. The sequence is that of Ankyrin repeat, SAM and basic leucine zipper domain-containing protein 1 from Homo sapiens (Human).